We begin with the raw amino-acid sequence, 203 residues long: Protein ILM1 (203 aa).

Over 1-3 (MAQ) the chain is Cytoplasmic. A helical transmembrane segment spans residues 4–24 (ALNSTNIAFFRVAFLFTIAFF). The Lumenal portion of the chain corresponds to 25–58 (CLKNVNSILQNTYFIVLTQAMNLPQLTLSRYSGQ). A helical transmembrane segment spans residues 59–79 (LGLFALLFTLNGVHDLIPLLE). The Cytoplasmic segment spans residues 80-92 (NNVKYFQSVVPVR). Residues 93–113 (LLIFFILTSISYLWESNFYVH) traverse the membrane as a helical segment. Residue Asn114 is a topological domain, lumenal. The helical transmembrane segment at 115–135 (NSVFIYCFAEVWINFLLYNAI) threads the bilayer. The Cytoplasmic portion of the chain corresponds to 136-203 (REEKNEEFKR…KGNDDSDAKK (68 aa)). Residues 175-187 (INDEENDDEDGKD) show a composition bias toward acidic residues. A disordered region spans residues 175 to 203 (INDEENDDEDGKDNDDNNEKGNDDSDAKK). Residues 188-203 (NDDNNEKGNDDSDAKK) are compositionally biased toward basic and acidic residues.

The protein belongs to the ILM1 family.

The protein resides in the endoplasmic reticulum membrane. In Saccharomyces cerevisiae (strain ATCC 204508 / S288c) (Baker's yeast), this protein is Protein ILM1 (ILM1).